Reading from the N-terminus, the 282-residue chain is Protoheme IX farnesyltransferase (282 aa).

The next 9 membrane-spanning stretches (helical) occupy residues 9–29 (LAKP…FLLA), 39–59 (LPLF…GCVF), 79–99 (LVTG…LLIL), 102–122 (LVLY…GFIV), 139–159 (VLGG…VVNI), 165–185 (LALF…IAML), 210–230 (IMLF…VLGS), 231–251 (ADLF…YKSI), and 261–281 (VFAK…CLTM).

This sequence belongs to the UbiA prenyltransferase family. Protoheme IX farnesyltransferase subfamily.

The protein localises to the cell inner membrane. It carries out the reaction heme b + (2E,6E)-farnesyl diphosphate + H2O = Fe(II)-heme o + diphosphate. It functions in the pathway porphyrin-containing compound metabolism; heme O biosynthesis; heme O from protoheme: step 1/1. Converts heme B (protoheme IX) to heme O by substitution of the vinyl group on carbon 2 of heme B porphyrin ring with a hydroxyethyl farnesyl side group. The chain is Protoheme IX farnesyltransferase from Francisella tularensis subsp. holarctica (strain LVS).